The chain runs to 306 residues: uncharacterized protein (306 aa).

Transmembrane regions (helical) follow at residues Leu7 to Ala27, Val30 to Leu50, Leu68 to Leu88, Ala95 to Ile115, Ala144 to Phe164, Ile194 to Val214, Ile232 to Phe252, and Thr274 to Pro294.

Its subcellular location is the cell membrane. This is an uncharacterized protein from Mycoplasma genitalium (strain ATCC 33530 / DSM 19775 / NCTC 10195 / G37) (Mycoplasmoides genitalium).